The following is a 419-amino-acid chain: DNA polymerase IV (419 aa).

One can recognise a UmuC domain in the interval 12 to 193; it reads IFHIDMNCFY…MSVEEMYGIG (182 aa). The Mg(2+) site is built by Asp-16 and Asp-112. Residue Glu-113 is part of the active site. The interval 388–419 is disordered; sequence IITSQKNKNESQENQQPRTSFQKDFLDDYKKP.

Belongs to the DNA polymerase type-Y family. Monomer. Mg(2+) is required as a cofactor.

Its subcellular location is the cytoplasm. The catalysed reaction is DNA(n) + a 2'-deoxyribonucleoside 5'-triphosphate = DNA(n+1) + diphosphate. Poorly processive, error-prone DNA polymerase involved in untargeted mutagenesis. Copies undamaged DNA at stalled replication forks, which arise in vivo from mismatched or misaligned primer ends. These misaligned primers can be extended by PolIV. Exhibits no 3'-5' exonuclease (proofreading) activity. May be involved in translesional synthesis, in conjunction with the beta clamp from PolIII. The protein is DNA polymerase IV of Oceanobacillus iheyensis (strain DSM 14371 / CIP 107618 / JCM 11309 / KCTC 3954 / HTE831).